A 918-amino-acid chain; its full sequence is Glutamate receptor ionotropic, kainate 1 (918 aa).

A signal peptide spans 1 to 30 (MELGTLLAQPGLWTRDTSWALLYFLCYILP). The Extracellular portion of the chain corresponds to 31 to 576 (QTAPQVLRIG…VFSFLNPLSP (546 aa)). Residues N68, N74, N276, N379, N428, N439, and N446 are each glycosylated (N-linked (GlcNAc...) asparagine). L-glutamate contacts are provided by P531, T533, and R538. N-linked (GlcNAc...) asparagine glycosylation is present at N561. A helical membrane pass occupies residues 577 to 597 (DIWMYVLLACLGVSCVLFVIA). The Cytoplasmic segment spans residues 598–653 (RFTPYEWYNPHPCNPDSDVVENNFTLLNSFWFGVGALMQQGSELMPKALSTRIVGG). The chain crosses the membrane as a helical span at residues 654-674 (IWWFFTLIIISSYTANLAAFL). Topologically, residues 675-834 (TVERMESPID…KEASALGVEN (160 aa)) are extracellular. Residues S704 and T705 each contribute to the L-glutamate site. S725 is modified (phosphoserine; by PKC). E753 is an L-glutamate binding site. Residue T761 is modified to Phosphothreonine; by PKC. C765 and C819 form a disulfide bridge. N766 is a glycosylation site (N-linked (GlcNAc...) asparagine). A helical transmembrane segment spans residues 835–855 (IGGIFIVLAAGLVLSVFVAIG). The Cytoplasmic portion of the chain corresponds to 856–918 (EFIYKSRKNN…IRKQSSVHTV (63 aa)).

It belongs to the glutamate-gated ion channel (TC 1.A.10.1) family. GRIK1 subfamily. In terms of assembly, homotetramer or heterotetramer of pore-forming glutamate receptor subunits. Tetramers may be formed by the dimerization of dimers. Can form functional heteromeric receptors with GRIK4 and GRIK5. Interacts with KLHL17.

The protein resides in the cell membrane. It localises to the postsynaptic cell membrane. It carries out the reaction Ca(2+)(in) = Ca(2+)(out). Ionotropic glutamate receptor that functions as a cation-permeable ligand-gated ion channel, gated by L-glutamate and the glutamatergic agonist kainic acid. L-glutamate acts as an excitatory neurotransmitter at many synapses in the central nervous system. Binding of the excitatory neurotransmitter L-glutamate induces a conformation change, leading to the opening of the cation channel, and thereby converts the chemical signal to an electrical impulse. The receptor then desensitizes rapidly and enters a transient inactive state, characterized by the presence of bound agonist. The sequence is that of Glutamate receptor ionotropic, kainate 1 (GRIK1) from Macaca fascicularis (Crab-eating macaque).